The sequence spans 74 residues: uncharacterized protein (74 aa).

This is an uncharacterized protein from Invertebrate iridescent virus 3 (IIV-3).